The chain runs to 414 residues: Serine hydroxymethyltransferase (414 aa).

(6S)-5,6,7,8-tetrahydrofolate contacts are provided by residues leucine 121 and 125 to 127 (GHL). The residue at position 229 (lysine 229) is an N6-(pyridoxal phosphate)lysine.

It belongs to the SHMT family. In terms of assembly, homodimer. Requires pyridoxal 5'-phosphate as cofactor.

It localises to the cytoplasm. The enzyme catalyses (6R)-5,10-methylene-5,6,7,8-tetrahydrofolate + glycine + H2O = (6S)-5,6,7,8-tetrahydrofolate + L-serine. Its pathway is one-carbon metabolism; tetrahydrofolate interconversion. It participates in amino-acid biosynthesis; glycine biosynthesis; glycine from L-serine: step 1/1. Catalyzes the reversible interconversion of serine and glycine with tetrahydrofolate (THF) serving as the one-carbon carrier. This reaction serves as the major source of one-carbon groups required for the biosynthesis of purines, thymidylate, methionine, and other important biomolecules. Also exhibits THF-independent aldolase activity toward beta-hydroxyamino acids, producing glycine and aldehydes, via a retro-aldol mechanism. In Janthinobacterium sp. (strain Marseille) (Minibacterium massiliensis), this protein is Serine hydroxymethyltransferase.